A 444-amino-acid polypeptide reads, in one-letter code: Trigger factor (444 aa).

The region spanning 160–245 (DMQVTFDFEG…VKQVEKPKLP (86 aa)) is the PPIase FKBP-type domain.

The protein belongs to the FKBP-type PPIase family. Tig subfamily.

Its subcellular location is the cytoplasm. The enzyme catalyses [protein]-peptidylproline (omega=180) = [protein]-peptidylproline (omega=0). Its function is as follows. Involved in protein export. Acts as a chaperone by maintaining the newly synthesized protein in an open conformation. Functions as a peptidyl-prolyl cis-trans isomerase. This is Trigger factor from Acinetobacter baumannii (strain AB0057).